The primary structure comprises 223 residues: Phosphoenolpyruvate guanylyltransferase (223 aa).

Residues Thr140, Gly156, and Ser159 each coordinate phosphoenolpyruvate.

It belongs to the CofC family.

The enzyme catalyses phosphoenolpyruvate + GTP + H(+) = enolpyruvoyl-2-diphospho-5'-guanosine + diphosphate. It functions in the pathway cofactor biosynthesis; coenzyme F420 biosynthesis. Functionally, guanylyltransferase that catalyzes the activation of phosphoenolpyruvate (PEP) as enolpyruvoyl-2-diphospho-5'-guanosine, via the condensation of PEP with GTP. It is involved in the biosynthesis of coenzyme F420, a hydride carrier cofactor. The protein is Phosphoenolpyruvate guanylyltransferase of Conexibacter woesei (strain DSM 14684 / CCUG 47730 / CIP 108061 / JCM 11494 / NBRC 100937 / ID131577).